The following is a 71-amino-acid chain: Protein SlyX homolog (71 aa).

The interval 49–71 (KIKESQSSSSMMSNEPEPPPPHY) is disordered.

This sequence belongs to the SlyX family.

This is Protein SlyX homolog from Pseudoalteromonas translucida (strain TAC 125).